Reading from the N-terminus, the 224-residue chain is Ribose-5-phosphate isomerase A (224 aa).

Substrate contacts are provided by residues 26–29, 82–85, and 95–98; these read TGST, DGAD, and KGGG. Glu104 (proton acceptor) is an active-site residue. A substrate-binding site is contributed by Lys122.

The protein belongs to the ribose 5-phosphate isomerase family. Homodimer.

The enzyme catalyses aldehydo-D-ribose 5-phosphate = D-ribulose 5-phosphate. Its pathway is carbohydrate degradation; pentose phosphate pathway; D-ribose 5-phosphate from D-ribulose 5-phosphate (non-oxidative stage): step 1/1. Catalyzes the reversible conversion of ribose-5-phosphate to ribulose 5-phosphate. The protein is Ribose-5-phosphate isomerase A of Lactococcus lactis subsp. cremoris (strain SK11).